Reading from the N-terminus, the 84-residue chain is Sulfur carrier protein TusA (84 aa).

C19 acts as the Cysteine persulfide intermediate in catalysis.

Belongs to the sulfur carrier protein TusA family. In terms of assembly, interacts with IscS.

The protein localises to the cytoplasm. It participates in tRNA modification. In terms of biological role, sulfur carrier protein involved in sulfur trafficking in the cell. Part of a sulfur-relay system required for 2-thiolation during synthesis of 2-thiouridine of the modified wobble base 5-methylaminomethyl-2-thiouridine (mnm(5)s(2)U) in tRNA. Interacts with IscS and stimulates its cysteine desulfurase activity. Accepts an activated sulfur from IscS, which is then transferred to TusD, and thus determines the direction of sulfur flow from IscS to 2-thiouridine formation. Also appears to be involved in sulfur transfer for the biosynthesis of molybdopterin. In Sodalis glossinidius (strain morsitans), this protein is Sulfur carrier protein TusA.